Reading from the N-terminus, the 419-residue chain is Tyrosine--tRNA ligase (419 aa).

Tyrosine 34 is a binding site for L-tyrosine. Positions 39–48 (PTADSLHLGH) match the 'HIGH' region motif. Positions 169 and 173 each coordinate L-tyrosine. The short motif at 229–233 (KFGKS) is the 'KMSKS' region element. Residue lysine 232 participates in ATP binding. In terms of domain architecture, S4 RNA-binding spans 352 to 419 (LNIIDLLVTS…KKKYFVLNFK (68 aa)).

The protein belongs to the class-I aminoacyl-tRNA synthetase family. TyrS type 1 subfamily. In terms of assembly, homodimer.

The protein localises to the cytoplasm. The enzyme catalyses tRNA(Tyr) + L-tyrosine + ATP = L-tyrosyl-tRNA(Tyr) + AMP + diphosphate + H(+). Catalyzes the attachment of tyrosine to tRNA(Tyr) in a two-step reaction: tyrosine is first activated by ATP to form Tyr-AMP and then transferred to the acceptor end of tRNA(Tyr). This Streptococcus agalactiae serotype Ia (strain ATCC 27591 / A909 / CDC SS700) protein is Tyrosine--tRNA ligase.